A 100-amino-acid polypeptide reads, in one-letter code: Ubiquitin-related modifier 1 homolog (100 aa).

Gly100 carries the post-translational modification 1-thioglycine. Gly100 participates in a covalent cross-link: Glycyl lysine isopeptide (Gly-Lys) (interchain with K-? in acceptor proteins).

The protein belongs to the URM1 family. In terms of processing, C-terminal thiocarboxylation occurs in 2 steps, it is first acyl-adenylated (-COAMP) via the hesA/moeB/thiF part of the MOCS3 homolog, then thiocarboxylated (-COSH) via the rhodanese domain of the MOCS3 homolog.

The protein resides in the cytoplasm. It functions in the pathway tRNA modification; 5-methoxycarbonylmethyl-2-thiouridine-tRNA biosynthesis. Functionally, acts as a sulfur carrier required for 2-thiolation of mcm(5)S(2)U at tRNA wobble positions of cytosolic tRNA(Lys), tRNA(Glu) and tRNA(Gln). Serves as sulfur donor in tRNA 2-thiolation reaction by being thiocarboxylated (-COSH) at its C-terminus by MOCS3. The sulfur is then transferred to tRNA to form 2-thiolation of mcm(5)S(2)U. Also acts as a ubiquitin-like protein (UBL) that is covalently conjugated via an isopeptide bond to lysine residues of target proteins. The thiocarboxylated form serves as substrate for conjugation and oxidative stress specifically induces the formation of UBL-protein conjugates. The protein is Ubiquitin-related modifier 1 homolog of Oryza sativa subsp. japonica (Rice).